We begin with the raw amino-acid sequence, 54 residues long: Ribulose bisphosphate carboxylase large chain (54 aa).

A propeptide spanning residues 1 to 2 is cleaved from the precursor; the sequence is MS. Position 3 is an N-acetylproline (proline 3). Position 14 is an N6,N6,N6-trimethyllysine (lysine 14).

It belongs to the RuBisCO large chain family. Type I subfamily. Heterohexadecamer of 8 large chains and 8 small chains.

The protein resides in the plastid. Its subcellular location is the chloroplast. The catalysed reaction is 2 (2R)-3-phosphoglycerate + 2 H(+) = D-ribulose 1,5-bisphosphate + CO2 + H2O. It carries out the reaction D-ribulose 1,5-bisphosphate + O2 = 2-phosphoglycolate + (2R)-3-phosphoglycerate + 2 H(+). Functionally, ruBisCO catalyzes two reactions: the carboxylation of D-ribulose 1,5-bisphosphate, the primary event in carbon dioxide fixation, as well as the oxidative fragmentation of the pentose substrate in the photorespiration process. Both reactions occur simultaneously and in competition at the same active site. This Geum borisii (Avens) protein is Ribulose bisphosphate carboxylase large chain (rbcL).